The primary structure comprises 1071 residues: Exportin-1 (1071 aa).

One can recognise an Importin N-terminal domain in the interval 46-112; it reads AQEVLTHLKE…KKYVVGLIIK (67 aa). HEAT repeat units follow at residues 217–240, 241–277, 354–472, 515–553, 560–597, and 602–639; these read QNAP…PLGY, IFET…VSVS, MLLV…YVDT, RFLV…QYPR, KFLK…KCRR, and VQVG…AVGY. The necessary for interaction with Ran and nuclear export complex formation stretch occupies residues 327-450; sequence CTFLKEHGQL…VREFMKDTDS (124 aa). Phosphoserine is present on Ser-391. Residues 411-481 are necessary for interaction with RANBP3; it reads TVLSKVRLLM…TEIIMTKKLQ (71 aa). Lys-446 carries the N6-acetyllysine modification. Thr-448 bears the Phosphothreonine mark. Ser-450 carries the phosphoserine modification. Tyr-454 is subject to Phosphotyrosine. The residue at position 693 (Lys-693) is an N6-acetyllysine. HEAT repeat units lie at residues 775 to 813, 885 to 916, and 917 to 954; these read NFVP…KLGG, TMRN…SFYQ, and TYFC…NLVE. Phosphoserine occurs at positions 966 and 1031. One copy of the HEAT 10 repeat lies at 1002-1039; it reads FSLNQDIPAFKEHLRDFLVQIKEFAGEDTSDLFLEERE.

This sequence belongs to the exportin family. Found in a U snRNA export complex with PHAX/RNUXA, NCBP1/CBP80, NCBP2/CBP20, RAN, XPO1 and m7G-capped RNA. Component of a nuclear export receptor complex composed of KPNB1, RAN, SNUPN and XPO1. Found in a trimeric export complex with SNUPN, RAN and XPO1. Found in a nuclear export complex with RANBP3 and RAN. Found in a 60S ribosomal subunit export complex with NMD3, RAN, XPO1. Interacts with DDX3X, NMD3, NUP42, NUP88, NUP214, RANBP3 and TERT. Interacts with NEMF (via its N-terminus). Interacts with the monomeric form of BIRC5/survivin deacetylated at 'Lys-129'. Interacts with DTNBP1 and SERTAD2; the interactions translocate DTNBP1 and SERTAD2 out of the nucleus. Interacts with ATF2. Interacts with SLC35G1 and STIM1. Interacts with DCAF8. Interacts with CPEB3. Interacts with HAX1. Interacts with BOK; translocates to the cytoplasm. Interacts with HSP90AB1. Interacts with LRPPRC; interacts with LRPPRC alone and also when LRPPRC is in complex with EIF4E and with EIF4E sensitivity element (4ESE)-containing mRNAs to form an EIF4E-dependent mRNA export complex.

It localises to the cytoplasm. It is found in the nucleus. Its subcellular location is the nucleoplasm. The protein resides in the cajal body. The protein localises to the nucleolus. Functionally, mediates the nuclear export of cellular proteins (cargos) bearing a leucine-rich nuclear export signal (NES) and of RNAs. In the nucleus, in association with RANBP3, binds cooperatively to the NES on its target protein and to the GTPase Ran in its active GTP-bound form. Docking of this complex to the nuclear pore complex (NPC) is mediated through binding to nucleoporins. Upon transit of a nuclear export complex into the cytoplasm, disassembling of the complex and hydrolysis of Ran-GTP to Ran-GDP (induced by RANBP1 and RANGAP1, respectively) cause release of the cargo from the export receptor. The directionality of nuclear export is thought to be conferred by an asymmetric distribution of the GTP- and GDP-bound forms of Ran between the cytoplasm and nucleus. Involved in U3 snoRNA transport from Cajal bodies to nucleoli. Binds to late precursor U3 snoRNA bearing a TMG cap. The chain is Exportin-1 (Xpo1) from Rattus norvegicus (Rat).